A 36-amino-acid polypeptide reads, in one-letter code: Potassium channel toxin alpha-KTx 16.9 (36 aa).

Cystine bridges form between cysteine 7/cysteine 28, cysteine 13/cysteine 33, and cysteine 17/cysteine 35.

Belongs to the short scorpion toxin superfamily. Potassium channel inhibitor family. Alpha-KTx 16 subfamily. In terms of tissue distribution, expressed by the venom gland.

It is found in the secreted. Poorly competes with (125)I-kaliotoxin binding on rat brain synaptosome (IC(50)&gt;100 nM). Is a poor Kv1.3/KCNA3 ligand. May have as real target KCa1.1/KCNMA1 channel. Shows weak toxicity on mice. The polypeptide is Potassium channel toxin alpha-KTx 16.9 (Buthus paris (Scorpion)).